The sequence spans 442 residues: Betaine reductase complex component B subunit alpha (442 aa).

In terms of assembly, heterotetramer of two alpha and two beta subunits. Component of the betaine reductase complex, together with components A and C. PB is substrate specific.

The catalysed reaction is acetyl phosphate + trimethylamine + [thioredoxin]-disulfide + H2O = glycine betaine + [thioredoxin]-dithiol + phosphate + H(+). In the first step of betaine reductase, the substrate is bound to component PB via a Schiff base intermediate. Then the PB-activated substrate is nucleophilically attacked by the selenol anion of component PA to transform it to a carboxymethylated selenoether and the respective amine. By action of component PC, acetyl phosphate is formed, leaving component PA in its oxidized state. Finally component PA becomes reduced by the thioredoxin system to start a new catalytic cycle of reductive deamination. The chain is Betaine reductase complex component B subunit alpha (grdI) from Peptoclostridium acidaminophilum (Eubacterium acidaminophilum).